The chain runs to 112 residues: Ribonuclease VapC8 (112 aa).

Residues 10–109 enclose the PINc domain; that stretch reads LLDTSVFIAR…TDALIAATAE (100 aa). Mg(2+) is bound by residues D12 and D101.

Belongs to the PINc/VapC protein family. It depends on Mg(2+) as a cofactor.

Toxic component of a type II toxin-antitoxin (TA) system. An RNase. The cognate antitoxin is VapB8. This chain is Ribonuclease VapC8 (vapC8), found in Mycobacterium tuberculosis (strain CDC 1551 / Oshkosh).